Consider the following 346-residue polypeptide: MRIAVDAMGGDNAPTIEVEGAVAACREFGIPITLVGDQERLRKELELHHCSGLDIDIFHASEVVGMHDSASDAIRRKKNSSVRLAFELVKEGKACAAVSAGNSGATMAAGMFVLKRIKGIDRPAIAQVFPTLKGKTLVLDIGGTVDCKPIHLAQFAIMGEVYARYVMGIADPVVGLLSNGEEESKGNELTRETNTLLRKTSLNYAGYIEGRDIFKGQIDVVVCDGFVGNIVLKLSEGLADAAGRMLKQEILKSWVSKLGYLFVRGAFKRFRRIVDYAEYGGAPLLGINGVGMICHGGSSVKAIKNAIRLAEEYARNGVAEHVVEKLSENHIESLQRDNAKLQAVGE.

Belongs to the PlsX family. As to quaternary structure, homodimer. Probably interacts with PlsY.

Its subcellular location is the cytoplasm. The enzyme catalyses a fatty acyl-[ACP] + phosphate = an acyl phosphate + holo-[ACP]. It functions in the pathway lipid metabolism; phospholipid metabolism. Catalyzes the reversible formation of acyl-phosphate (acyl-PO(4)) from acyl-[acyl-carrier-protein] (acyl-ACP). This enzyme utilizes acyl-ACP as fatty acyl donor, but not acyl-CoA. This is Phosphate acyltransferase from Pelobacter propionicus (strain DSM 2379 / NBRC 103807 / OttBd1).